A 693-amino-acid polypeptide reads, in one-letter code: Guanyl-specific ribonuclease pgl-3 (693 aa).

Positions 205 to 447 (KKLMIEGPKI…VNRIIESLEK (243 aa)) are involved in dimerization. Catalysis depends on His-437, which acts as the Proton acceptor. Disordered stretches follow at residues 445-468 (LEKS…GPTT), 523-591 (AEKN…DATP), and 620-693 (SSNG…RGGS). The segment covering 447 to 468 (KSSSSEPSATAKQTTTSNGPTT) has biased composition (low complexity). 2 stretches are compositionally biased toward polar residues: residues 528-548 (NTPS…SPTK) and 569-580 (ITKVSPQPQERT). The required for interaction with sepa-1 stretch occupies residues 581 to 614 (GTAWGSGDATPVPLATPVNEYKVSGFGAAPVASG). 3 stretches are compositionally biased toward gly residues: residues 625–634 (SGRGSYGGGR), 641–660 (RGAY…SRGY), and 668–693 (RGSY…RGGS). The RNA-binding RGG-box stretch occupies residues 633–693 (GRGGDRGGRG…GFFGGSRGGS (61 aa)).

May form a homodimer. Interacts with pgl-1 and pgl-2; this association is not required for P-granule localization of either pgl-1 or pgl-2. Interacts with sepa-1; the interaction is enhanced in the presence of RNA. Interacts with prmt-1; the interaction is direct. In terms of processing, methylated at arginine residues in the RNA-binding RGG-box by prmt-1. Methylation promotes P-granule degradation by autophagy. As to expression, highly expressed in the germline. Expressed in most somatic cells.

It localises to the cytoplasmic granule. The catalysed reaction is [RNA] containing guanosine + H2O = an [RNA fragment]-3'-guanosine-3'-phosphate + a 5'-hydroxy-ribonucleotide-3'-[RNA fragment].. Guanyl-specific endoribonuclease which cleaves the phosphodiester bond in single-stranded RNA between the 3'-guanylic residue and the 5'-OH residue of adjacent nucleotide, resulting in the formation of a corresponding 2',3'-cyclic phosphate intermediate. P-granule component involved in germline development. Together with the P-granule component pgl-1, is involved in the formation of P-granules. Together with pgl-1, probably recruits other granule components such as pos-1, mex-3 and glh-1, and RNA to P-granules. In vitro, binds mRNA; this interaction is required for the formation of liquid-like droplets that resemble P-granules. Most likely recruits pgl-1 into P-granules during autophagy. Associates with adapters such as sepa-1 and is required for the accumulation and degradation of P-granules by autophagy in somatic cells. This ensures exclusive localization of the P-granules in germ cells. In addition, may act redundantly with pgl-1 to protect germ cells from excessive germline apoptosis during normal oogenesis and development of the two gonadal arms. This may in part be through regulating the localization of sir-2.1 which is involved in germ cell apoptosis. May protect somatic cells from excessive apoptosis during normal development. The chain is Guanyl-specific ribonuclease pgl-3 from Caenorhabditis elegans.